Consider the following 369-residue polypeptide: Glutamate 5-kinase (369 aa).

Lys-9 serves as a coordination point for ATP. 3 residues coordinate substrate: Ser-49, Asp-136, and Asn-148. ATP contacts are provided by residues 168 to 169 and 210 to 216; these read TD and TGGMLTK. One can recognise a PUA domain in the interval 275 to 355; sequence RGSVYVDEGA…KGVFIHRDDW (81 aa).

The protein belongs to the glutamate 5-kinase family.

Its subcellular location is the cytoplasm. The catalysed reaction is L-glutamate + ATP = L-glutamyl 5-phosphate + ADP. Its pathway is amino-acid biosynthesis; L-proline biosynthesis; L-glutamate 5-semialdehyde from L-glutamate: step 1/2. In terms of biological role, catalyzes the transfer of a phosphate group to glutamate to form L-glutamate 5-phosphate. This is Glutamate 5-kinase from Neisseria meningitidis serogroup B (strain ATCC BAA-335 / MC58).